A 148-amino-acid chain; its full sequence is 3-dehydroquinate dehydratase (148 aa).

Tyr-23 acts as the Proton acceptor in catalysis. Positions 75, 81, and 88 each coordinate substrate. Residue His-101 is the Proton donor of the active site. Substrate contacts are provided by residues 102-103 (IS) and Arg-112.

This sequence belongs to the type-II 3-dehydroquinase family. Homododecamer.

It catalyses the reaction 3-dehydroquinate = 3-dehydroshikimate + H2O. The protein operates within metabolic intermediate biosynthesis; chorismate biosynthesis; chorismate from D-erythrose 4-phosphate and phosphoenolpyruvate: step 3/7. Catalyzes a trans-dehydration via an enolate intermediate. In Methylococcus capsulatus (strain ATCC 33009 / NCIMB 11132 / Bath), this protein is 3-dehydroquinate dehydratase.